The primary structure comprises 355 residues: Adenine deaminase (355 aa).

Residues histidine 23, histidine 25, and histidine 211 each coordinate Zn(2+). Glutamate 214 functions as the Proton donor in the catalytic mechanism. Position 292 (aspartate 292) interacts with Zn(2+). Position 293 (aspartate 293) interacts with substrate.

The protein belongs to the metallo-dependent hydrolases superfamily. Adenosine and AMP deaminases family. Adenine deaminase type 2 subfamily. Requires Zn(2+) as cofactor.

Its subcellular location is the cytoplasm. The protein resides in the nucleus. The enzyme catalyses adenine + H2O + H(+) = hypoxanthine + NH4(+). Its function is as follows. Catalyzes the hydrolytic deamination of adenine to hypoxanthine. Plays an important role in the purine salvage pathway and in nitrogen catabolism. This Kluyveromyces lactis (strain ATCC 8585 / CBS 2359 / DSM 70799 / NBRC 1267 / NRRL Y-1140 / WM37) (Yeast) protein is Adenine deaminase.